Consider the following 216-residue polypeptide: Orotate phosphoribosyltransferase (216 aa).

A 5-phospho-alpha-D-ribose 1-diphosphate-binding site is contributed by K30. An orotate-binding site is contributed by F38–F39. Residues Y75–K76, R102, K103, K106, H108, and D128–A136 contribute to the 5-phospho-alpha-D-ribose 1-diphosphate site. Residues T132 and R160 each coordinate orotate.

The protein belongs to the purine/pyrimidine phosphoribosyltransferase family. PyrE subfamily. In terms of assembly, homodimer. Mg(2+) serves as cofactor.

It catalyses the reaction orotidine 5'-phosphate + diphosphate = orotate + 5-phospho-alpha-D-ribose 1-diphosphate. The protein operates within pyrimidine metabolism; UMP biosynthesis via de novo pathway; UMP from orotate: step 1/2. Catalyzes the transfer of a ribosyl phosphate group from 5-phosphoribose 1-diphosphate to orotate, leading to the formation of orotidine monophosphate (OMP). This Acinetobacter baylyi (strain ATCC 33305 / BD413 / ADP1) protein is Orotate phosphoribosyltransferase.